Consider the following 652-residue polypeptide: Acetyl-coenzyme A synthetase (652 aa).

CoA contacts are provided by residues 191-194 (RAGR), Thr311, and Asn335. ATP contacts are provided by residues 387–389 (GEP), 411–416 (DTWWQT), Asp500, and Arg515. Ser523 serves as a coordination point for CoA. Arg526 is a binding site for ATP. Mg(2+) contacts are provided by Val537, His539, and Ile542. A CoA-binding site is contributed by Arg584. Lys609 is subject to N6-acetyllysine.

It belongs to the ATP-dependent AMP-binding enzyme family. Mg(2+) is required as a cofactor. In terms of processing, acetylated. Deacetylation by the SIR2-homolog deacetylase activates the enzyme.

The enzyme catalyses acetate + ATP + CoA = acetyl-CoA + AMP + diphosphate. Functionally, catalyzes the conversion of acetate into acetyl-CoA (AcCoA), an essential intermediate at the junction of anabolic and catabolic pathways. Acs undergoes a two-step reaction. In the first half reaction, Acs combines acetate with ATP to form acetyl-adenylate (AcAMP) intermediate. In the second half reaction, it can then transfer the acetyl group from AcAMP to the sulfhydryl group of CoA, forming the product AcCoA. In terms of biological role, enables the cell to use acetate during aerobic growth to generate energy via the TCA cycle, and biosynthetic compounds via the glyoxylate shunt. Acetylates CheY, the response regulator involved in flagellar movement and chemotaxis. The protein is Acetyl-coenzyme A synthetase of Citrobacter koseri (strain ATCC BAA-895 / CDC 4225-83 / SGSC4696).